A 200-amino-acid chain; its full sequence is High mobility group protein 1 homolog (200 aa).

DNA-binding regions (HMG box) lie at residues 11–81 and 100–168; these read PRGR…QSYK and PKRN…AEYK. The span at 64-86 shows a compositional bias: basic and acidic residues; sequence EKSMRDKVRYDREMQSYKPPKGE. Disordered regions lie at residues 64–103 and 169–200; these read EKSM…PKRN and AKAK…DDSD. Positions 190-200 are enriched in acidic residues; the sequence is SSDDSSSDDSD.

This sequence belongs to the HMGB family.

Its subcellular location is the nucleus. The protein localises to the chromosome. In terms of biological role, binds preferentially single-stranded DNA and unwinds double-stranded DNA. The sequence is that of High mobility group protein 1 homolog (HMG1) from Strongylocentrotus purpuratus (Purple sea urchin).